The following is a 124-amino-acid chain: Small ribosomal subunit protein uS12 (124 aa).

Residues 1–24 are disordered; the sequence is MTTINQLVRKPRQATTYKSASPAL. Asp-89 is subject to 3-methylthioaspartic acid.

The protein belongs to the universal ribosomal protein uS12 family. In terms of assembly, part of the 30S ribosomal subunit. Contacts proteins S8 and S17. May interact with IF1 in the 30S initiation complex.

Its function is as follows. With S4 and S5 plays an important role in translational accuracy. Functionally, interacts with and stabilizes bases of the 16S rRNA that are involved in tRNA selection in the A site and with the mRNA backbone. Located at the interface of the 30S and 50S subunits, it traverses the body of the 30S subunit contacting proteins on the other side and probably holding the rRNA structure together. The combined cluster of proteins S8, S12 and S17 appears to hold together the shoulder and platform of the 30S subunit. The protein is Small ribosomal subunit protein uS12 of Xanthomonas axonopodis pv. citri (strain 306).